The following is a 287-amino-acid chain: Hypersensitive-induced response protein-like protein 2 (287 aa).

The N-myristoyl glycine moiety is linked to residue Gly2.

Its function is as follows. Positive regulator of hypersensitive response (HR)-like cell death. May be involved in potassium ion channel regulation. This Oryza sativa subsp. japonica (Rice) protein is Hypersensitive-induced response protein-like protein 2 (HIRL2).